A 413-amino-acid chain; its full sequence is Clamp protein VP6 (413 aa).

Belongs to the reoviridae clamp protein family. As to quaternary structure, interacts with capsid proteins VP3, VP4 and VP7.

Its subcellular location is the virion. Functionally, located at the interface of the incomplete T=13 outer capsid and the pseudo T=2 inner capsid, 120 VP6 subunits clamp and stabilize the inner capsid shell. The sequence is that of Clamp protein VP6 (S8) from Ctenopharyngodon idella (Grass carp).